A 372-amino-acid chain; its full sequence is tRNA-specific 2-thiouridylase MnmA (372 aa).

Residues 16–23 and Met-42 contribute to the ATP site; that span reads GMSGGVDS. The segment at 102-104 is interaction with target base in tRNA; sequence NPD. Cys-107 acts as the Nucleophile in catalysis. Residues Cys-107 and Cys-205 are joined by a disulfide bond. Gly-132 contributes to the ATP binding site. Residues 155-157 are interaction with tRNA; that stretch reads KDQ. The active-site Cysteine persulfide intermediate is Cys-205. Positions 317-318 are interaction with tRNA; sequence RY.

The protein belongs to the MnmA/TRMU family.

The protein localises to the cytoplasm. The catalysed reaction is S-sulfanyl-L-cysteinyl-[protein] + uridine(34) in tRNA + AH2 + ATP = 2-thiouridine(34) in tRNA + L-cysteinyl-[protein] + A + AMP + diphosphate + H(+). Functionally, catalyzes the 2-thiolation of uridine at the wobble position (U34) of tRNA, leading to the formation of s(2)U34. This is tRNA-specific 2-thiouridylase MnmA from Shewanella putrefaciens (strain CN-32 / ATCC BAA-453).